Here is a 102-residue protein sequence, read N- to C-terminus: Large ribosomal subunit protein uL23 (102 aa).

Belongs to the universal ribosomal protein uL23 family. In terms of assembly, part of the 50S ribosomal subunit. Contacts protein L29, and trigger factor when it is bound to the ribosome.

One of the early assembly proteins it binds 23S rRNA. One of the proteins that surrounds the polypeptide exit tunnel on the outside of the ribosome. Forms the main docking site for trigger factor binding to the ribosome. In Chromobacterium violaceum (strain ATCC 12472 / DSM 30191 / JCM 1249 / CCUG 213 / NBRC 12614 / NCIMB 9131 / NCTC 9757 / MK), this protein is Large ribosomal subunit protein uL23.